Here is a 497-residue protein sequence, read N- to C-terminus: Aspartyl/glutamyl-tRNA(Asn/Gln) amidotransferase subunit B (497 aa).

This sequence belongs to the GatB/GatE family. GatB subfamily. In terms of assembly, heterotrimer of A, B and C subunits.

The enzyme catalyses L-glutamyl-tRNA(Gln) + L-glutamine + ATP + H2O = L-glutaminyl-tRNA(Gln) + L-glutamate + ADP + phosphate + H(+). The catalysed reaction is L-aspartyl-tRNA(Asn) + L-glutamine + ATP + H2O = L-asparaginyl-tRNA(Asn) + L-glutamate + ADP + phosphate + 2 H(+). Allows the formation of correctly charged Asn-tRNA(Asn) or Gln-tRNA(Gln) through the transamidation of misacylated Asp-tRNA(Asn) or Glu-tRNA(Gln) in organisms which lack either or both of asparaginyl-tRNA or glutaminyl-tRNA synthetases. The reaction takes place in the presence of glutamine and ATP through an activated phospho-Asp-tRNA(Asn) or phospho-Glu-tRNA(Gln). The chain is Aspartyl/glutamyl-tRNA(Asn/Gln) amidotransferase subunit B from Cutibacterium acnes (strain DSM 16379 / KPA171202) (Propionibacterium acnes).